Reading from the N-terminus, the 144-residue chain is Nucleoside diphosphate kinase (144 aa).

Residues Lys5, Phe53, Arg81, Thr87, Arg98, and Asn108 each coordinate ATP. Residue His111 is the Pros-phosphohistidine intermediate of the active site.

This sequence belongs to the NDK family. Mg(2+) serves as cofactor.

It carries out the reaction a 2'-deoxyribonucleoside 5'-diphosphate + ATP = a 2'-deoxyribonucleoside 5'-triphosphate + ADP. The enzyme catalyses a ribonucleoside 5'-diphosphate + ATP = a ribonucleoside 5'-triphosphate + ADP. Major role in the synthesis of nucleoside triphosphates other than ATP. The ATP gamma phosphate is transferred to the NDP beta phosphate via a ping-pong mechanism, using a phosphorylated active-site intermediate. This Solanum lycopersicum (Tomato) protein is Nucleoside diphosphate kinase.